The following is a 111-amino-acid chain: Large ribosomal subunit protein uL22 (111 aa).

This sequence belongs to the universal ribosomal protein uL22 family. As to quaternary structure, part of the 50S ribosomal subunit.

Functionally, this protein binds specifically to 23S rRNA; its binding is stimulated by other ribosomal proteins, e.g. L4, L17, and L20. It is important during the early stages of 50S assembly. It makes multiple contacts with different domains of the 23S rRNA in the assembled 50S subunit and ribosome. In terms of biological role, the globular domain of the protein is located near the polypeptide exit tunnel on the outside of the subunit, while an extended beta-hairpin is found that lines the wall of the exit tunnel in the center of the 70S ribosome. The protein is Large ribosomal subunit protein uL22 of Mycoplasma capricolum subsp. capricolum (strain California kid / ATCC 27343 / NCTC 10154).